Consider the following 1254-residue polypeptide: NPC intracellular cholesterol transporter 1 homolog 1b (1254 aa).

An N-terminal signal peptide occupies residues 1–16 (MKVIFATIWLIAGAWS). At 17–272 (QSAEQLGCIW…WKIAGLYGVT (256 aa)) the chain is on the extracellular side. 8 disulfides stabilise this stretch: cysteine 24–cysteine 81, cysteine 62–cysteine 116, cysteine 82–cysteine 120, cysteine 104–cysteine 241, cysteine 107–cysteine 161, cysteine 178–cysteine 186, cysteine 231–cysteine 246, and cysteine 243–cysteine 250. N-linked (GlcNAc...) asparagine glycosylation is found at asparagine 123 and asparagine 132. The helical transmembrane segment at 273 to 293 (FILALIIACALSFFIFWGAFG) threads the bilayer. At 294–325 (KTSAPSVCMPTLFGEFFYHGFRIWGTFCAKHP) the chain is on the cytoplasmic side. A helical transmembrane segment spans residues 326–346 (VIVLALCSWAIAGLSFGIRYM). The Extracellular portion of the chain corresponds to 347 to 593 (TITTDPVELW…AIVELSEGEV (247 aa)). Residue asparagine 389 is glycosylated (N-linked (GlcNAc...) asparagine). A disulfide bond links cysteine 438 and cysteine 454. The N-linked (GlcNAc...) asparagine glycan is linked to asparagine 479. Cysteine 491 and cysteine 500 are disulfide-bonded. Positions 592-757 (EVSTVVISYV…ITAFVALMAI (166 aa)) constitute an SSD domain. A helical membrane pass occupies residues 594–614 (STVVISYVVMFVYVAIALGHI). The Cytoplasmic portion of the chain corresponds to 615-625 (RSCRGFLRESR). The helical transmembrane segment at 626 to 646 (IMLAIGGIVIVLASVVCSLGF) threads the bilayer. Topologically, residues 647–657 (WGYLDVTTTML) are extracellular. Residues 658-678 (AIEVIPFLVLAVGVDNIFIMV) traverse the membrane as a helical segment. At 679–736 (HTYQRLDHSKFKTTHEAIGEAIGQVGPSILQTAGSEMACFAIGCISDMPAVKTFAMYA) the chain is on the cytoplasmic side. A helical membrane pass occupies residues 737–757 (AIAILLDFLLQITAFVALMAI). Over 758–815 (DEKRYLDGRLDMLCCVKSGGKKINDEDGDGVDRPKEVGLLETLFKNFYSPFLLSKPVK) the chain is Extracellular. The helical transmembrane segment at 816–836 (VSVLLIFTVITCLSLMVTPSI) threads the bilayer. The Cytoplasmic segment spans residues 837 to 857 (EKGLDQEMSMPKNSHVVKYFR). The chain crosses the membrane as a helical span at residues 858–878 (YMVDLLAMGAPVYWVLKPGLN). The Extracellular segment spans residues 879 to 1079 (YSEPLQQNLI…EQYLTIWGDA (201 aa)). A disulfide bridge links cysteine 889 with cysteine 894. N-linked (GlcNAc...) asparagine glycans are attached at residues asparagine 896 and asparagine 939. 3 disulfide bridges follow: cysteine 935-cysteine 990, cysteine 936-cysteine 958, and cysteine 946-cysteine 955. A helical transmembrane segment spans residues 1080–1100 (MFSLGMSLVAIFLVTLLITGL). Over 1101-1105 (DITST) the chain is Cytoplasmic. Residues 1106–1126 (FIVLFMVICILINMLGMMWAW) form a helical membrane-spanning segment. The Extracellular portion of the chain corresponds to 1127–1132 (SINLNA). Residues 1133-1153 (ISLVNLVVCVGIGVEFVAHIV) form a helical membrane-spanning segment. Over 1154-1174 (RSFKRAEGTAQERARHSLNVT) the chain is Cytoplasmic. The chain crosses the membrane as a helical span at residues 1175–1195 (GSSVLSGITLTKFAGIVVLGF). At 1196–1207 (SNSQIFQVFYFR) the chain is on the extracellular side. The helical transmembrane segment at 1208–1228 (MYLGIVLIGAAHGLILLPVLL) threads the bilayer. Residues 1229–1254 (SLLGPPQKLARSSGAEPTASITITTN) lie on the Cytoplasmic side of the membrane.

The protein belongs to the patched family. Expressed in the midgut.

The protein localises to the cell membrane. It carries out the reaction cholesterol(in) = cholesterol(out). In terms of biological role, important for cholesterol absorption at the midgut epithelium. Acts only in the early steps of sterol absorption, prior to Npc1a-dependent intracellular sterol trafficking. The polypeptide is NPC intracellular cholesterol transporter 1 homolog 1b (Drosophila melanogaster (Fruit fly)).